Consider the following 232-residue polypeptide: Thrombin-like enzyme bothrombin (232 aa).

The region spanning 1–223 (VIGGDECDIN…YLPWIQSIIA (223 aa)) is the Peptidase S1 domain. 6 disulfide bridges follow: Cys-7–Cys-139, Cys-26–Cys-42, Cys-74–Cys-230, Cys-118–Cys-184, Cys-150–Cys-163, and Cys-174–Cys-199. Catalysis depends on charge relay system residues His-41 and Asp-86. N-linked (GlcNAc...) asparagine glycosylation is found at Asn-98 and Asn-146. Ser-178 serves as the catalytic Charge relay system. N-linked (GlcNAc...) asparagine glycosylation is present at Asn-225.

It belongs to the peptidase S1 family. Snake venom subfamily. As to quaternary structure, monomer. As to expression, expressed by the venom gland.

Its subcellular location is the secreted. The enzyme catalyses Selective cleavage of Arg-|-Xaa bond in fibrinogen, to form fibrin, and release fibrinopeptide A. The specificity of further degradation of fibrinogen varies with species origin of the enzyme.. Inhibited by diisopropylfluorophosphate (DFP), but not by hirudin. In terms of biological role, thrombin-like snake venom serine protease that clots fibrinogen by releasing fibrinopeptide A from the alpha chain of fibrinogen (FGA), induces platelet aggregation through its interaction with GPIb (GP1BA/GP1BB), and activates factor VIII (F8). This is Thrombin-like enzyme bothrombin from Bothrops jararaca (Jararaca).